Reading from the N-terminus, the 238-residue chain is Aerobic respiration control protein ArcA (238 aa).

The region spanning 5-118 (HILIVEDELV…ELTIRARNLL (114 aa)) is the Response regulatory domain. At Asp-54 the chain carries 4-aspartylphosphate. A DNA-binding region (ompR/PhoB-type) is located at residues 134-234 (VESYKFNGWE…IHGEGYRFCG (101 aa)).

In terms of processing, phosphorylated by ArcB.

The protein localises to the cytoplasm. Functionally, member of the two-component regulatory system ArcB/ArcA. Represses a wide variety of aerobic enzymes under anaerobic conditions. It may also be involved in the osmoregulation of envelope proteins. When activated by ArcB, it negatively regulates the expression of genes of aerobic function. Activates the transcription of the plfB operon by binding to its promoter. The polypeptide is Aerobic respiration control protein ArcA (arcA) (Escherichia coli O157:H7).